A 337-amino-acid chain; its full sequence is MNIEATLKNYDLSKLNVVTIASHSSLQILRGAKRHGLGTVAVAKPGSGWFYRRFNFIDNVIEIDLGSMEQLAGDLVKNNAILIPHGSYVEYVGWRRALSMPIPTFGNRYIIEWEADQRKKMRLLEYAGIPIPRSFNDPTQVDRPVIVKLSGAKGGRGYFIAKDAGELAGKLSSINTDDYIIQEYVIGVPAYYHYFDSKVYDRVELFGMDLRYESNVDGRLFNLAEPTFVVTGNIPLVLRESLLPTVQKYGEDFSRAVAELVPPGMIGPYSLESIIKDDLSIVVFEFSGRIVAGTNVYMGVGSPYSVLYFNEPMDMGERIAHEIVNAVKRGKLINVLT.

His-23 and Ser-87 together coordinate 5-amino-1-(5-phospho-beta-D-ribosyl)imidazole-4-carboxamide. The region spanning Met-121–Lys-328 is the ATP-grasp domain. ATP-binding positions include Pro-144–Tyr-191 and Glu-213. Asn-233 contacts 5-amino-1-(5-phospho-beta-D-ribosyl)imidazole-4-carboxamide. Positions 272 and 285 each coordinate Mg(2+).

Belongs to the phosphohexose mutase family. Mg(2+) serves as cofactor. Requires Mn(2+) as cofactor.

The catalysed reaction is 5-amino-1-(5-phospho-beta-D-ribosyl)imidazole-4-carboxamide + formate + ATP = 5-formamido-1-(5-phospho-D-ribosyl)imidazole-4-carboxamide + ADP + phosphate. Its pathway is purine metabolism; IMP biosynthesis via de novo pathway; 5-formamido-1-(5-phospho-D-ribosyl)imidazole-4-carboxamide from 5-amino-1-(5-phospho-D-ribosyl)imidazole-4-carboxamide (formate route): step 1/1. Its function is as follows. Catalyzes the ATP- and formate-dependent formylation of 5-aminoimidazole-4-carboxamide-1-beta-d-ribofuranosyl 5'-monophosphate (AICAR) to 5-formaminoimidazole-4-carboxamide-1-beta-d-ribofuranosyl 5'-monophosphate (FAICAR) in the absence of folates. The sequence is that of 5-formaminoimidazole-4-carboxamide-1-(beta)-D-ribofuranosyl 5'-monophosphate synthetase from Caldivirga maquilingensis (strain ATCC 700844 / DSM 13496 / JCM 10307 / IC-167).